The primary structure comprises 336 residues: Holliday junction branch migration complex subunit RuvB (336 aa).

The large ATPase domain (RuvB-L) stretch occupies residues 4-184; sequence ADRLVAPGSI…FGIVQRLEFY (181 aa). ATP is bound by residues isoleucine 23, arginine 24, glycine 65, lysine 68, threonine 69, threonine 70, 131–133, arginine 174, tyrosine 184, and arginine 221; that span reads EDY. Mg(2+) is bound at residue threonine 69. The small ATPAse domain (RuvB-S) stretch occupies residues 185-255; that stretch reads QVADLQHIVS…VASQALDMLN (71 aa). The head domain (RuvB-H) stretch occupies residues 258–336; that stretch reads AEGFDYMDRK…HFGITPPQMP (79 aa). DNA is bound by residues arginine 294, arginine 313, and arginine 318.

This sequence belongs to the RuvB family. As to quaternary structure, homohexamer. Forms an RuvA(8)-RuvB(12)-Holliday junction (HJ) complex. HJ DNA is sandwiched between 2 RuvA tetramers; dsDNA enters through RuvA and exits via RuvB. An RuvB hexamer assembles on each DNA strand where it exits the tetramer. Each RuvB hexamer is contacted by two RuvA subunits (via domain III) on 2 adjacent RuvB subunits; this complex drives branch migration. In the full resolvosome a probable DNA-RuvA(4)-RuvB(12)-RuvC(2) complex forms which resolves the HJ.

It localises to the cytoplasm. It catalyses the reaction ATP + H2O = ADP + phosphate + H(+). Functionally, the RuvA-RuvB-RuvC complex processes Holliday junction (HJ) DNA during genetic recombination and DNA repair, while the RuvA-RuvB complex plays an important role in the rescue of blocked DNA replication forks via replication fork reversal (RFR). RuvA specifically binds to HJ cruciform DNA, conferring on it an open structure. The RuvB hexamer acts as an ATP-dependent pump, pulling dsDNA into and through the RuvAB complex. RuvB forms 2 homohexamers on either side of HJ DNA bound by 1 or 2 RuvA tetramers; 4 subunits per hexamer contact DNA at a time. Coordinated motions by a converter formed by DNA-disengaged RuvB subunits stimulates ATP hydrolysis and nucleotide exchange. Immobilization of the converter enables RuvB to convert the ATP-contained energy into a lever motion, pulling 2 nucleotides of DNA out of the RuvA tetramer per ATP hydrolyzed, thus driving DNA branch migration. The RuvB motors rotate together with the DNA substrate, which together with the progressing nucleotide cycle form the mechanistic basis for DNA recombination by continuous HJ branch migration. Branch migration allows RuvC to scan DNA until it finds its consensus sequence, where it cleaves and resolves cruciform DNA. The polypeptide is Holliday junction branch migration complex subunit RuvB (Cronobacter sakazakii (strain ATCC BAA-894) (Enterobacter sakazakii)).